Here is a 179-residue protein sequence, read N- to C-terminus: MKQFLDFLPLVVFFAFYKLYDIYAATSALIVATAIVLIYSWVRYRKIEKMALITFVLVAVFGGLTLFFHNDEFIKWKVTVIYALFAGALLMSQWVMKKPLIQRMLGKELALPQQIWSKLNLAWALFFIVCGLANIYIAFWLPQNIWVNFKVFGLTALTLIFTLLSGVYIYRHLPQEDKS.

5 helical membrane-spanning segments follow: residues 22 to 42 (IYAATSALIVATAIVLIYSWV), 50 to 70 (MALITFVLVAVFGGLTLFFHN), 76 to 96 (WKVTVIYALFAGALLMSQWVM), 121 to 141 (LAWALFFIVCGLANIYIAFWL), and 149 to 169 (FKVFGLTALTLIFTLLSGVYI).

Belongs to the YciB family.

The protein localises to the cell inner membrane. Its function is as follows. Plays a role in cell envelope biogenesis, maintenance of cell envelope integrity and membrane homeostasis. This chain is Inner membrane-spanning protein YciB, found in Salmonella arizonae (strain ATCC BAA-731 / CDC346-86 / RSK2980).